The following is a 156-amino-acid chain: Histone acetyltransferase HPA2 (156 aa).

The N-acetyltransferase domain maps to 9–156; that stretch reads ITVRFVTEND…PKILYKRKGY (148 aa). An acetyl-CoA-binding site is contributed by 93–106; sequence LYVDENSRVKGAGG.

It belongs to the acetyltransferase family. GNAT subfamily. As to quaternary structure, forms homodimers in the absence, and homotetramers in the presence of acetyl-CoA. Post-translationally, autoacetylates in an intermolecular reaction.

It carries out the reaction L-lysyl-[protein] + acetyl-CoA = N(6)-acetyl-L-lysyl-[protein] + CoA + H(+). N-acetyltransferase that acetylates histone H3 at 'Lys-14' and histone H4 at 'Lys-5' and 'Lys-12'. Also acetylates polyamines like putrescine, spermidine and spermine, and certain other small basic proteins like nuclear HMG proteins. This chain is Histone acetyltransferase HPA2, found in Saccharomyces cerevisiae (strain ATCC 204508 / S288c) (Baker's yeast).